Consider the following 1470-residue polypeptide: Guanine nucleotide exchange factor subunit R06F6.8 (1470 aa).

WD repeat units lie at residues 20–58 (STAADIKSIVANRDRRLIAVATNDAIYIWLANPQLLLCS), 68–107 (ETRGELKEIYWKPDSTSIAVTTNQCKILIYNLDLRDDEQC), and 472–512 (AYCS…VVGV). 4 disordered regions span residues 673–710 (QSQNQDLPWKNHRRNGSNVSIQSVSTSTTSEPSSPMNQ), 975–1001 (FFRTPPPSAKTSLSRRPTVSSPSADSS), 1017–1045 (RLNKVRHSQSTEQKDAPRKDSIGGSSKDK), and 1238–1259 (RSPSTSSSMNHHAPLAPPSPSS). Over residues 689-707 (SNVSIQSVSTSTTSEPSSP) the composition is skewed to low complexity. Residues 983–1001 (AKTSLSRRPTVSSPSADSS) show a composition bias toward polar residues. A compositionally biased stretch (basic and acidic residues) spans 1028–1045 (EQKDAPRKDSIGGSSKDK). A helical transmembrane segment spans residues 1294-1314 (LLLSLFSQTATIDWIFLFCLL). A compositionally biased stretch (basic and acidic residues) spans 1385 to 1403 (SPDNENRKASQKTSADDPK). The interval 1385–1447 (SPDNENRKAS…SADRAHKSVK (63 aa)) is disordered. Over residues 1411–1424 (SGSSKLNNSFSNPK) the composition is skewed to polar residues. The span at 1431–1447 (GRRERSRSADRAHKSVK) shows a compositional bias: basic and acidic residues.

Belongs to the RIC1 family. In terms of assembly, component of a guanine nucleotide exchange factor (GEF) complex.

The protein resides in the membrane. Functionally, probable component of a guanine nucleotide exchange factor (GEF) that may be required for efficient fusion of endosome-derived vesicles with the Golgi. The chain is Guanine nucleotide exchange factor subunit R06F6.8 from Caenorhabditis elegans.